The following is a 438-amino-acid chain: Tol-Pal system protein TolB (438 aa).

An N-terminal signal peptide occupies residues 1–35 (MITMKNILKLRATGLLLLLLLMISVLGNGIGQAMA).

The protein belongs to the TolB family. The Tol-Pal system is composed of five core proteins: the inner membrane proteins TolA, TolQ and TolR, the periplasmic protein TolB and the outer membrane protein Pal. They form a network linking the inner and outer membranes and the peptidoglycan layer.

It localises to the periplasm. Functionally, part of the Tol-Pal system, which plays a role in outer membrane invagination during cell division and is important for maintaining outer membrane integrity. This chain is Tol-Pal system protein TolB, found in Desulfotalea psychrophila (strain LSv54 / DSM 12343).